We begin with the raw amino-acid sequence, 455 residues long: Venom prothrombin activator trocarin-D (455 aa).

Positions 1 to 20 (MAPQLLLCLILTFLWSLPEA) are cleaved as a signal peptide. Residues 21–40 (ESNVFLKSKVANRFLQRTKR) constitute a propeptide that is removed on maturation. Positions 41–86 (SNSLFEEIRPGNIERECIEEKCSKEEAREVFEDNEKTETFWNVYVD) constitute a Gla domain. E46, E47, E54, E56, E59, E60, E65, E66, E69, E72, and E75 each carry 4-carboxyglutamate. A disulfide bridge connects residues C57 and C62. Residues 86 to 122 (DGDQCSSNPCHYRGTCKDGIGSYTCTCLPNYEGKNCE) enclose the EGF-like 1; calcium-binding domain. 11 cysteine pairs are disulfide-bonded: C90–C101, C95–C110, C112–C121, C129–C140, C136–C149, C151–C164, C172–C328, C216–C221, C236–C252, C376–C390, and C401–C429. S92 carries an O-linked (Hex...) serine glycan. One can recognise an EGF-like 2 domain in the interval 129–164 (CRVDNGNCWHFCKRVQSETQCSCAESYRLGVDGHSC). The propeptide at 182 to 209 (REASLPDFVQSQKATLLKKSDNPSPDIR) is activation peptide. The 244-residue stretch at 210–453 (IVNGMDCKLG…FIPWIKKIMS (244 aa)) folds into the Peptidase S1 domain. The Charge relay system role is filled by H251. N254 carries N-linked (GlcNAc...) asparagine glycosylation. Residue D308 is the Charge relay system of the active site. Catalysis depends on S405, which acts as the Charge relay system.

Belongs to the peptidase S1 family. Snake venom subfamily. As to quaternary structure, heterodimer of a light chain and a heavy chain; disulfide-linked. Post-translationally, gamma-carboxyglutamate residues are formed by vitamin K dependent carboxylation. These residues are essential for the binding of calcium. The O-linked saccharides at Ser-92 are a mixture of Xyl-Glc, and Glc along with smaller amounts of Xyl-GlcNAc, GlcNAc, Gal, GalNAc, Xyl-Gal, and Xyl-GalNAc, suggesting that the glycosyl transferases responsible for this modification are non-specific. The N-linked carbohydrate at Asn-254 (Asn-45 of the heavy chain) is a sialylated and diantennary oligosaccharide. In terms of tissue distribution, expressed by the venom gland.

Its subcellular location is the secreted. It carries out the reaction Selective cleavage of Arg-|-Thr and then Arg-|-Ile bonds in prothrombin to form thrombin.. Activated by calcium and phospholipids. Functionally, snake prothrombin activator that attacks the hemostatic system of prey. This protein is functionally similar to blood coagulation factor Xa. Induces cyanosis and death in mice at 1 mg/kg body weight during blood clotting. The protein is Venom prothrombin activator trocarin-D of Tropidechis carinatus (Australian rough-scaled snake).